A 1108-amino-acid chain; its full sequence is Topless-related protein 3 (1108 aa).

Positions 4–36 (LSRELVFLILQFLEEEKFKESVHRLEKESGFFF) constitute a LisH domain. A CTLH domain is found at 34–92 (FFFNTKYFDEKVLAGEWDDVETYLSGFTKVDDNRYSMKIFFEIRKQKYLEALDRQEKAK). Serine 214 is subject to Phosphoserine. 6 WD repeats span residues 343–383 (HQGS…RLVS), 405–444 (ETPI…DLRQ), 450–491 (AHVG…HFTF), 493–534 (GHDA…SRVD), 583–623 (EFQK…VLTS), and 628–667 (GGLP…RSLR). A disordered region spans residues 706–725 (HSQMLNGVDPSKSRIDDSTD). Basic and acidic residues predominate over residues 716–725 (SKSRIDDSTD). WD repeat units lie at residues 751-790 (GSST…QNPS), 818-856 (NLEN…VMTT), 859-899 (PPPP…VKSK), 902-941 (GHQK…KRKS), and 994-1033 (SLSA…LRCR). The segment at 1084 to 1108 (GMIPPSEAINSPSTTSNQTPEQLQR) is disordered. Residues 1091–1108 (AINSPSTTSNQTPEQLQR) are compositionally biased toward polar residues.

In terms of assembly, tetramer. Interacts with NINJA/AFPH2. Interacts with SMXL6. Interacts with SPL (via EAR motif). Interacts with SPEAR3/TIE1.

The protein localises to the nucleus. Functionally, transcriptional corepressor. Negative regulator of jasmonate responses. The chain is Topless-related protein 3 (TPR3) from Arabidopsis thaliana (Mouse-ear cress).